Here is a 259-residue protein sequence, read N- to C-terminus: Glandular kallikrein-10 (259 aa).

A signal peptide spans 1 to 18; sequence MWFLILFLALSLGGIDAA. The propeptide at 19–24 is activation peptide; the sequence is PPGQSR. The Peptidase S1 domain maps to 25–256; it reads IVGGYKCEKN…FTSWIKEVMK (232 aa). Intrachain disulfides connect cysteine 31–cysteine 171, cysteine 48–cysteine 64, cysteine 150–cysteine 217, cysteine 182–cysteine 196, and cysteine 207–cysteine 232. Histidine 63 serves as the catalytic Charge relay system. Residues asparagine 91 and asparagine 106 are each glycosylated (N-linked (GlcNAc...) asparagine). Aspartate 118 serves as the catalytic Charge relay system. Residue serine 211 is the Charge relay system of the active site.

This sequence belongs to the peptidase S1 family. Kallikrein subfamily. In terms of assembly, heterodimer of a light chain and heavy chain linked by a disulfide bond. In terms of processing, probably N- and O-glycosylated. Kidney and submandibular gland, where it is found in the granular convoluted tubule and striated duct cells. It is likely that the enzyme is mainly synthesized in the granular convoluted tubules and then transferred to other tissues by release into the vasculature or interstitial space.

It catalyses the reaction Preferential cleavage of Arg-|-Xaa bonds in small molecule substrates. Highly selective action to release kallidin (lysyl-bradykinin) from kininogen involves hydrolysis of Met-|-Xaa or Leu-|-Xaa.. Glandular kallikreins cleave Met-Lys and Arg-Ser bonds in kininogen to release Lys-bradykinin. This protein may be involved in the regulation of renal function. This chain is Glandular kallikrein-10 (Klk10), found in Rattus norvegicus (Rat).